We begin with the raw amino-acid sequence, 372 residues long: MMMRFLSAVVIMSSAMAVGLVSAQRCGSQGGGGTCPALWCCSIWGWCGDSEPYCGRTCENKCWSGERSDHRCGAAVGNPPCGQDRCCSVHGWCGGGNDYCSGSKCQYRCSSSVRGPRVALSGNSTANSIGNVVVTEPLFDQMFSHRKDCPSQGFYSYHSFLVAAESFPAFGTIGDVATRKREVAAFLAHISQATSGERSDVENPHAWGLCHINTTTVTENDFCTSSDWPCAAGKKYSPRGPIQLTHNFNYGLAGQAIGEDLIQNPDLVEKDPIISFKTALWFWMSQHDNKPSCHDIVLNANSAANRIPNKGVIGNIISRAFGHDDFAVRSSSIGFYKRYCDMLGVSYGHDLKYWFDNTPSSEFQRIQMRVAA.

The signal sequence occupies residues 1 to 23 (MMMRFLSAVVIMSSAMAVGLVSA). A substrate-binding site is contributed by Q24. A Pyrrolidone carboxylic acid modification is found at Q24. Chitin-binding type-1 domains lie at 24-64 (QRCG…KCWS) and 69-111 (DHRC…RCSS). 4 cysteine pairs are disulfide-bonded: C26–C41, C35–C47, C40–C54, and C58–C62. A substrate-binding site is contributed by 42–53 (SIWGWCGDSEPY). Zn(2+) is bound at residue H70. Disulfide bonds link C72/C87, C81/C93, C86/C100, and C105/C109. Position 90 (H90) interacts with Zn(2+). The tract at residues 113-128 (VRGPRVALSGNSTANS) is spacer. N123 is a glycosylation site (N-linked (GlcNAc...) asparagine). Residues 129–372 (IGNVVVTEPL…FQRIQMRVAA (244 aa)) are chitinase.

As to quaternary structure, monomer and homodimer. Zinc favors dimerization. Active in the monomeric form but probably inactive in the dimeric form. The interaction with glycans on the mammalian TCR and MHC molecules of the T-cell and antigen-presenting cell, respectively, is inhibited by oligomers of GlcNAc. Post-translationally, proteolytically processed to yield a very small protein (8.5 kDa, 86 AA) containing only the two chitin-binding domains. Rhizomes and inflorescence with immature seeds.

The enzyme catalyses Random endo-hydrolysis of N-acetyl-beta-D-glucosaminide (1-&gt;4)-beta-linkages in chitin and chitodextrins.. Functionally, functions both as a chitinase and as a N-acetyl-D-glucosamine binding lectin. Inhibits the growth of several phytopathogenic chitin-containing fungi. Also possesses insecticidal activity and superantigenic properties. The polypeptide is Lectin/endochitinase 1 (UDA1) (Urtica dioica (Great nettle)).